The following is a 1864-amino-acid chain: RNA1 polyprotein (1864 aa).

An SF3 helicase domain is found at 457–622 (LERLHRNAAV…VEYQSDDFTA (166 aa)). Residue 483-490 (GNSRCGKS) coordinates ATP. A helical transmembrane segment spans residues 892-912 (AGNGAGLVGAAVNSFSVVSTA). Residue Ser916 is modified to O-(5'-phospho-RNA)-serine. The Peptidase C3 domain occupies 943-1146 (QMSLDQSTVS…MASLLPPLLP (204 aa)). Active-site for picornain 3C-like protease activity residues include His983, Glu1019, and Cys1109. Positions 1426–1556 (NDILCCDYSS…SVNAVVKPYF (131 aa)) constitute a RdRp catalytic domain.

In terms of processing, specific enzymatic cleavages by picornain 3C-like protease in vivo yield mature proteins. Picornain 3C-like protease is autocatalytically processed. Post-translationally, uridylylated by the polymerase and is covalently linked to the 5'-end of genomic RNA. This uridylylated form acts as a nucleotide-peptide primer for the polymerase.

It is found in the host membrane. Its subcellular location is the host cytoplasm. The protein resides in the host perinuclear region. The protein localises to the host endoplasmic reticulum. It catalyses the reaction RNA(n) + a ribonucleoside 5'-triphosphate = RNA(n+1) + diphosphate. Functionally, thiol protease that cleaves the RNA1 and RNA2 polyproteins. Its function is as follows. Plays a role in RNA replication. It is covalently linked to the 5'terminus of both viral single-stranded RNA1 and RNA2 molecules. Down-regulates the RNA1 polyprotein processing and enhances trans-cleavage of RNA2 polyproteins. The protease cofactor and the putative helicase seem to target the replication complexes to ER membranes. Their physical association causes the membrane rearrangement of host ER that may result in formation of the small membranous vesicles that are the site of viral RNA synthesis. In terms of biological role, the protease cofactor and the putative helicase seem to target the replication complexes to ER membranes. Their physical association causes the membrane rearrangement of host ER that may result in formation of the small membranous vesicles that are the site of viral RNA synthesis. Functionally, replicates the viral genome. This Trifolium pratense (Red clover) protein is RNA1 polyprotein.